We begin with the raw amino-acid sequence, 150 residues long: Linear element protein rec25 (150 aa).

Serine 11 is modified (phosphoserine).

Component of linear elements (LinEs), which are similar to synaptonemal complexes, at least composed of rec27, rec25, rec10 and mug20. Interacts with rec10; the interaction is direct.

It is found in the cytoplasm. It localises to the nucleus. The protein resides in the chromosome. During meiotic DNA recombination, binds to and may help activate DNA double-strand break (DSB) hotspot sites. In Schizosaccharomyces pombe (strain 972 / ATCC 24843) (Fission yeast), this protein is Linear element protein rec25.